A 179-amino-acid polypeptide reads, in one-letter code: Large ribosomal subunit protein uL5 (179 aa).

It belongs to the universal ribosomal protein uL5 family. As to quaternary structure, part of the 50S ribosomal subunit; part of the 5S rRNA/L5/L18/L25 subcomplex. Contacts the 5S rRNA and the P site tRNA. Forms a bridge to the 30S subunit in the 70S ribosome.

Its function is as follows. This is one of the proteins that bind and probably mediate the attachment of the 5S RNA into the large ribosomal subunit, where it forms part of the central protuberance. In the 70S ribosome it contacts protein S13 of the 30S subunit (bridge B1b), connecting the 2 subunits; this bridge is implicated in subunit movement. Contacts the P site tRNA; the 5S rRNA and some of its associated proteins might help stabilize positioning of ribosome-bound tRNAs. The chain is Large ribosomal subunit protein uL5 from Bordetella bronchiseptica (strain ATCC BAA-588 / NCTC 13252 / RB50) (Alcaligenes bronchisepticus).